The chain runs to 860 residues: Nucleolar MIF4G domain-containing protein 1 (860 aa).

3 disordered regions span residues 1–172 (MAAS…AARK), 191–211 (RCLGLNKRKKKDGSSSVPLSF), and 226–339 (GKNS…EKYI). Residues 1–269 (MAASRSAGEA…EEEEEGDVEK (269 aa)) form a necessary for nucleolar localization and for targeting PPP1CA to the nucleolus region. Positions 20–31 (VRMKRRGGRGPR) are enriched in basic residues. At S57 the chain carries Phosphoserine. A compositionally biased stretch (basic residues) spans 77–99 (GGRKSRKELRKEKRHLRKARRLQ). A compositionally biased stretch (basic and acidic residues) spans 115–131 (GAEEASGHRQDTEERAR). S139 is modified (phosphoserine). Basic residues predominate over residues 142–151 (RKPRPSRVKA). A compositionally biased stretch (low complexity) spans 152–169 (KATAATAKTRPSAAATAA). 2 stretches are compositionally biased toward acidic residues: residues 249-267 (SDLESDSQDESEEEEEGDV) and 278-293 (AQSEDDDEDTEEEQGE). A Required for efficient binding to PPP1CA and for targeting PPP1CA to the nucleolus motif is present at residues 307–310 (RVRF). A compositionally biased stretch (acidic residues) spans 312 to 325 (EDEEKSENSSEDGD). S317, S320, and S321 each carry phosphoserine. The region spanning 362-559 (KKHVKGLLNR…ETMLALKNND (198 aa)) is the MIF4G domain. Residues 654–770 (DIRRNIFCTI…SLSILKVVEF (117 aa)) form the MI domain.

Belongs to the CWC22 family. As to quaternary structure, may interact with EIF4A1, EIF4A2 and EIF4A3. Interacts with PPP1CA and PPP1CC. Expressed in heart and skeletal muscle.

The protein localises to the nucleus. Its subcellular location is the nucleolus. In terms of biological role, plays a role in targeting PPP1CA to the nucleolus. This is Nucleolar MIF4G domain-containing protein 1 (NOM1) from Homo sapiens (Human).